Reading from the N-terminus, the 853-residue chain is Deubiquitinase otu (853 aa).

Positions 1-20 (MDMQVQRPITSGSRQAPDPY) are disordered. The OTU domain maps to 29 to 150 (LYRKHTARDA…ENHFDSVYDV (122 aa)). Asp-37 is an active-site residue. Ser-40 functions as the Nucleophile in the catalytic mechanism. Residue His-143 is part of the active site. Residues 336–396 (NFKVGAKCKV…HPLPPDEYRP (61 aa)) form the Tudor domain. Residues 396–853 (PWSLPFRYHR…AAVYAATRHH (458 aa)) are LC domain. Residues 460 to 470 (QDDEQRDHNDP) are compositionally biased toward basic and acidic residues. Disordered stretches follow at residues 460–531 (QDDE…YVPM), 681–704 (AVESTPPPSPEVANATEQSPLEKS), 732–794 (GPAA…AAQG), and 817–853 (NMDPSAQPQQQQPATLQPAPLSVQSQPAAVYAATRHH). Low complexity predominate over residues 499 to 517 (SRVQPQNSSSSQNQEVSGS). The segment covering 747 to 758 (NGSQFSFYTTPS) has biased composition (polar residues). Residues 769–778 (LLQPPPPPPI) are compositionally biased toward pro residues. 2 stretches are compositionally biased toward low complexity: residues 783-794 (AGPPQLGGAAQG) and 820-838 (PSAQPQQQQPATLQPAPLS).

As to quaternary structure, self aggregates, forming amyloid-like fibrillar helical structures; protein aggregation is mediated by the C-terminal LC domain, is enhanced by RNA binding and is essential for deubiquitinase activity. Interacts (via OTU domain) with bam (via C-terminus); the interaction enhances otu aggregation and deubiquitinase activity. Together with bam interacts with CycA/cyclin-A; the interaction stabilizes CycA by promoting its deubiquitination. Together with bam interacts with Traf6. Interacts with Hrb27C; the interaction is RNA-independent. Associates (via N-terminus) with mRNP complexes; the interaction is weak. Expressed at high levels in the ovary, at low levels in the brain and fat body, and at moderate levels in the gut.

It is found in the cytoplasm. The protein localises to the cell cortex. Its subcellular location is the perinuclear region. With respect to regulation, activated by protein aggregation, which is mediated by the LC domain and enhanced by RNA binding. Its function is as follows. Catalytic component of a deubiquitinase complex consisting of bam and otu. The complex deubiquitinates K63-linked polyubiquitinated proteins; this antagonizes the ubiquitination activity of Traf6 and regulates the IMD immune signaling pathway. Otu-bam deubiquitinase activity is regulated by Traf6 dependent immune signaling regulation of bam expression levels; this forms a feedback loop that regulates the IMD immune signaling pathway and balances gut immune activity during aging. The complex deubiquitinates and stabilizes CycA/cyclin-A to regulate CycA-dependent differentiation. Involved in grk mRNA localization to the dorsal anterior region of the oocyte required for dorsal-ventral axis determination; may function as a ribonuclear protein complex together with sqd and Hrb27C. May regulate actin cytoskeleton organization in differentiating cystocytes during fusome maturation; required for efficient nurse cell cytoplasmic dumping during oogenesis. Essential for female fertility; involved in germ cell proliferation and germ cell differentiation. Involved in the early stages of germ cell proliferation and differentiation during oogenesis. Required for polytene chromosome dispersal in nurse cells during oogenesis. Functionally, involved in the later stages of germ cell proliferation and differentiation during oogenesis. The sequence is that of Deubiquitinase otu from Drosophila melanogaster (Fruit fly).